Reading from the N-terminus, the 315-residue chain is tRNA-dihydrouridine(16) synthase (315 aa).

FMN-binding positions include 7–9 (PME) and Gln-68. Cys-98 serves as the catalytic Proton donor. Residues Lys-139, 199–201 (NGE), and 223–224 (GR) each bind FMN.

The protein belongs to the Dus family. DusC subfamily. Requires FMN as cofactor.

The catalysed reaction is 5,6-dihydrouridine(16) in tRNA + NADP(+) = uridine(16) in tRNA + NADPH + H(+). It catalyses the reaction 5,6-dihydrouridine(16) in tRNA + NAD(+) = uridine(16) in tRNA + NADH + H(+). Catalyzes the synthesis of 5,6-dihydrouridine (D), a modified base found in the D-loop of most tRNAs, via the reduction of the C5-C6 double bond in target uridines. Specifically modifies U16 in tRNAs. This Aquipseudomonas alcaligenes (Pseudomonas alcaligenes) protein is tRNA-dihydrouridine(16) synthase.